Reading from the N-terminus, the 232-residue chain is MKIYIEGEKIRGTFQKRVNRFIAEVKVGSQLVVVHVANTGRMKELLTPGAEVLLRRVNEPHRKTNYDLLMVYHKGILVSIDSKLPNRLLYQGFINKEIVAFDKFNEVKREVTYGKSRLDLALINEEKELVLIEAKCVTLVKEGELASFPDAPTERGTRHVRELTEAVKQNIRGAVFFIVQREDAVRFTPNKEMDPQFQQAVTEAKKAGVEFYAYNCIVTEDYIAINDELEIF.

The protein belongs to the SfsA family.

This chain is Sugar fermentation stimulation protein homolog, found in Alkaliphilus metalliredigens (strain QYMF).